The sequence spans 266 residues: Chymotrypsin-like elastase family member 1 (266 aa).

Residues 1 to 16 (MLRLLVFTSLVLYGHS) form the signal peptide. A propeptide spans 17-26 (TQDFPETNAR) (activation peptide). The Peptidase S1 domain occupies 27 to 264 (VVGGTAVSKN…YISWINNAIA (238 aa)). C56 and C72 form a disulfide bridge. Residue H71 is the Charge relay system of the active site. The Ca(2+) site is built by D85, N87, Q90, and E95. The N-linked (GlcNAc...) asparagine glycan is linked to N87. D119 acts as the Charge relay system in catalysis. Disulfide bonds link C153–C220, C184–C200, and C210–C240. S214 (charge relay system) is an active-site residue. N241 carries N-linked (GlcNAc...) asparagine glycosylation.

It belongs to the peptidase S1 family. Elastase subfamily. Ca(2+) is required as a cofactor. Pancreas.

It localises to the secreted. The catalysed reaction is Hydrolysis of proteins, including elastin. Preferential cleavage: Ala-|-Xaa.. Its function is as follows. Serine proteases that hydrolyze many proteins in addition to elastin. The chain is Chymotrypsin-like elastase family member 1 (CELA1) from Bos taurus (Bovine).